The following is a 651-amino-acid chain: Threonine--tRNA ligase (651 aa).

The TGS domain maps to 1–61 (MIKITFPDNS…NDDATVKLLK (61 aa)). Residues 242 to 541 (DHRKIGKEMD…LIEHTAGKFP (300 aa)) are catalytic. Positions 337, 388, and 518 each coordinate Zn(2+).

The protein belongs to the class-II aminoacyl-tRNA synthetase family. Homodimer. Zn(2+) is required as a cofactor.

The protein resides in the cytoplasm. It catalyses the reaction tRNA(Thr) + L-threonine + ATP = L-threonyl-tRNA(Thr) + AMP + diphosphate + H(+). Functionally, catalyzes the attachment of threonine to tRNA(Thr) in a two-step reaction: L-threonine is first activated by ATP to form Thr-AMP and then transferred to the acceptor end of tRNA(Thr). Also edits incorrectly charged L-seryl-tRNA(Thr). The chain is Threonine--tRNA ligase from Parabacteroides distasonis (strain ATCC 8503 / DSM 20701 / CIP 104284 / JCM 5825 / NCTC 11152).